The chain runs to 71 residues: Large ribosomal subunit protein uL30 (71 aa).

Belongs to the universal ribosomal protein uL30 family. In terms of assembly, part of the 50S ribosomal subunit.

This chain is Large ribosomal subunit protein uL30, found in Borreliella burgdorferi (strain ATCC 35210 / DSM 4680 / CIP 102532 / B31) (Borrelia burgdorferi).